Here is a 794-residue protein sequence, read N- to C-terminus: Protein argonaute-4 (794 aa).

Positions 152-271 constitute a PAZ domain; that stretch reads PIIEFMCEVL…LPLEVCNIVA (120 aa). One can recognise a Piwi domain in the interval 442–753; it reads LIVVILPGKT…VAFRARYHLV (312 aa). The disordered stretch occupies residues 758–779; it reads DSAEGSHVSGQSNGRDPQALAK.

Belongs to the argonaute family. Ago subfamily.

It localises to the cytoplasm. The protein resides in the P-body. Functionally, required for RNA-mediated gene silencing (RNAi). Binds to short RNAs such as microRNAs (miRNAs) and represses the translation of mRNAs which are complementary to them. Lacks endonuclease activity and does not appear to cleave target mRNAs. This chain is Protein argonaute-4 (AGO4), found in Gallus gallus (Chicken).